Here is a 179-residue protein sequence, read N- to C-terminus: Large ribosomal subunit protein uL22c (179 aa).

It belongs to the universal ribosomal protein uL22 family. In terms of assembly, part of the 50S ribosomal subunit.

The protein localises to the plastid. It is found in the chloroplast. In terms of biological role, this protein binds specifically to 23S rRNA. Functionally, the globular domain of the protein is located near the polypeptide exit tunnel on the outside of the subunit, while an extended beta-hairpin is found that lines the wall of the exit tunnel in the center of the 70S ribosome. The polypeptide is Large ribosomal subunit protein uL22c (rpl22) (Ranunculus macranthus (Large buttercup)).